A 470-amino-acid chain; its full sequence is ATP synthase subunit beta (470 aa).

151–158 (GGAGVGKT) serves as a coordination point for ATP.

Belongs to the ATPase alpha/beta chains family. F-type ATPases have 2 components, CF(1) - the catalytic core - and CF(0) - the membrane proton channel. CF(1) has five subunits: alpha(3), beta(3), gamma(1), delta(1), epsilon(1). CF(0) has three main subunits: a(1), b(2) and c(9-12). The alpha and beta chains form an alternating ring which encloses part of the gamma chain. CF(1) is attached to CF(0) by a central stalk formed by the gamma and epsilon chains, while a peripheral stalk is formed by the delta and b chains.

The protein resides in the cell membrane. It catalyses the reaction ATP + H2O + 4 H(+)(in) = ADP + phosphate + 5 H(+)(out). Its function is as follows. Produces ATP from ADP in the presence of a proton gradient across the membrane. The catalytic sites are hosted primarily by the beta subunits. The sequence is that of ATP synthase subunit beta from Mycoplasma mobile (strain ATCC 43663 / 163K / NCTC 11711) (Mesomycoplasma mobile).